The chain runs to 240 residues: 7-cyano-7-deazaguanine synthase (240 aa).

Residue 18–28 (FSGGQDSTTCL) coordinates ATP. Residues Cys197, Cys206, Cys209, and Cys212 each contribute to the Zn(2+) site.

The protein belongs to the QueC family. It depends on Zn(2+) as a cofactor.

The enzyme catalyses 7-carboxy-7-deazaguanine + NH4(+) + ATP = 7-cyano-7-deazaguanine + ADP + phosphate + H2O + H(+). It functions in the pathway purine metabolism; 7-cyano-7-deazaguanine biosynthesis. Catalyzes the ATP-dependent conversion of 7-carboxy-7-deazaguanine (CDG) to 7-cyano-7-deazaguanine (preQ(0)). In Shewanella putrefaciens (strain CN-32 / ATCC BAA-453), this protein is 7-cyano-7-deazaguanine synthase.